Consider the following 858-residue polypeptide: Toll-like receptor 5 (858 aa).

The first 20 residues, 1–20 (MGDHLDLLLGVVLMAGPVFG), serve as a signal peptide directing secretion. At 21–639 (IPSCSFDGRI…DEEEVLKSLK (619 aa)) the chain is on the extracellular side. Asn-37 and Asn-46 each carry an N-linked (GlcNAc...) asparagine glycan. LRR repeat units follow at residues 45-68 (LNTT…SFPF), 71-93 (QLQL…AFRN), 95-117 (PNLR…AFQG), 120-143 (HLFE…YFRN), 146-166 (ALTR…HPSF), 171-192 (SLKS…ELEP), 197-211 (TLSF…LYSR), 214-229 (VDWG…MVLE), and 234-235 (SG). N-linked (GlcNAc...) asparagine glycosylation is present at Asn-245. LRR repeat units follow at residues 260–284 (LAHH…TFAG), 289–301 (SVRH…GFVF), 313–334 (DLKV…AFYG), 337–355 (NLQV…YSSN), 385–401 (KLQT…TIHF), 412–431 (GNKL…IHLS), 449–470 (HLQI…QTPS), 474–495 (SLEQ…ELCW), 503–524 (HLQV…VFSH), 527–546 (ALRG…HNDL), and 549–567 (NLEI…NPDV). The N-linked (GlcNAc...) asparagine glycan is linked to Asn-342. The N-linked (GlcNAc...) asparagine glycan is linked to Asn-422. Positions 579–631 (NKFICECELSTFINWLNHTNVTIAGPPADIYCVYPDSFSGVSLFSLSTEGCDE) constitute an LRRCT domain. Disulfide bonds link Cys-583–Cys-610 and Cys-585–Cys-629. Asn-595 and Asn-598 each carry an N-linked (GlcNAc...) asparagine glycan. Residues 640–660 (FSLFIVCTVTLTLFLMTILTV) traverse the membrane as a helical segment. The Cytoplasmic segment spans residues 661 to 858 (TKFRGFCFIC…IPLQTVATIS (198 aa)). One can recognise a TIR domain in the interval 691 to 836 (YKYDAYLCFS…WFLHKLSQQI (146 aa)). Residue Tyr-798 is modified to Phosphotyrosine. The residue at position 805 (Ser-805) is a Phosphoserine; by PKD/PRKD1.

Belongs to the Toll-like receptor family. In terms of assembly, homodimer. Interacts with MYD88 (via TIR domain). Interacts with TICAM1 (via TIR domain). Interacts with UNC93B1; this interaction is essential for proper TLR5 localization to the plasma membrane. Phosphorylated at Ser-805 by PKD/PRKD1; phosphorylation induces the production of inflammatory cytokines. In terms of processing, phosphorylated at Tyr-798 upon flagellin binding; required for signaling. As to expression, highly expressed on the basolateral surface of intestinal epithelia. Expressed also in other cells such as lung epithelial cells.

Its subcellular location is the cell membrane. In terms of biological role, pattern recognition receptor (PRR) located on the cell surface that participates in the activation of innate immunity and inflammatory response. Recognizes small molecular motifs named pathogen-associated molecular pattern (PAMPs) expressed by pathogens and microbe-associated molecular patterns (MAMPs) usually expressed by resident microbiota. Upon ligand binding such as bacterial flagellins, recruits intracellular adapter proteins MYD88 and TRIF leading to NF-kappa-B activation, cytokine secretion and induction of the inflammatory response. Plays thereby an important role in the relationship between the intestinal epithelium and enteric microbes and contributes to the gut microbiota composition throughout life. The sequence is that of Toll-like receptor 5 (TLR5) from Homo sapiens (Human).